The sequence spans 683 residues: Protein zntD (683 aa).

3 helical membrane-spanning segments follow: residues 12–32 (IIST…PYWM), 42–62 (LSWS…LHLF), and 79–99 (PFAA…ELII). Residues 120 to 129 (VHLSHGHSHH) are compositionally biased toward basic residues. 4 disordered regions span residues 120 to 180 (VHLS…TTTT), 299 to 325 (GFSN…NNNN), 364 to 390 (CSND…TPNT), and 451 to 489 (IGNS…NNNN). Over residues 137 to 149 (GNPGSGVGIGMGS) the composition is skewed to gly residues. Composition is skewed to low complexity over residues 160–180 (TTSP…TTTT) and 302–325 (NNNN…NNNN). Positions 451–465 (IGNSGNIGSNNNNNN) are enriched in low complexity. Residues 466–475 (NGGGGGGGGN) are compositionally biased toward gly residues. A compositionally biased stretch (low complexity) spans 476-489 (SNIDYNDNEENNNN). The next 5 helical transmembrane spans lie at 534-554 (ILLP…EGLA), 564-584 (VFDI…ALGI), 600-620 (FLLV…GMVI), 631-651 (PPIL…VEII), and 662-682 (ILIK…VAIW).

It belongs to the ZIP transporter (TC 2.A.5) family.

Its subcellular location is the membrane. May transport divalent cations. May participate, with dstA, in the regulation of the differentiation of stalk cells during development. The protein is Protein zntD (zntD) of Dictyostelium discoideum (Social amoeba).